Reading from the N-terminus, the 117-residue chain is Large ribosomal subunit protein uL18 (117 aa).

This sequence belongs to the universal ribosomal protein uL18 family. Part of the 50S ribosomal subunit; part of the 5S rRNA/L5/L18/L25 subcomplex. Contacts the 5S and 23S rRNAs.

Functionally, this is one of the proteins that bind and probably mediate the attachment of the 5S RNA into the large ribosomal subunit, where it forms part of the central protuberance. The protein is Large ribosomal subunit protein uL18 of Blochmanniella floridana.